The primary structure comprises 262 residues: MDDDNVLFHIRTLQGNVIKSLFDCLKEILHDVMLSFGPTGIRISALDGAKVSLVHLKLDSESFEEYKCEHTYELGVNVLNMFKLLRSAGSHDSILFRYLKNDPHMIELTIQNFEKNSLTKFNMKLIEIDSVEIEVGDIEFDTIIVMPANYFQRICRDMSDITDHLVIVKKGDEVSFNSDYTCVTDFASQKTIIGDSDNGQITCNNDTDYESKFSLKYLTSFCKASGMSSAVEIYLKESYPLILKYTVGSMGALKFVIAPILS.

Residues 67 to 86 mediate DNA binding; that stretch reads KCEHTYELGVNVLNMFKLLR.

The protein belongs to the PCNA family.

Functionally, sliding clamp subunit. Responsible for tethering the catalytic subunit of DNA polymerase to DNA during high-speed replication. The protein is Probable DNA polymerase sliding clamp 1 of Chlorella (PBCV-1).